Reading from the N-terminus, the 458-residue chain is ATP synthase subunit beta (458 aa).

Position 148–155 (G148–T155) interacts with ATP.

It belongs to the ATPase alpha/beta chains family. In terms of assembly, F-type ATPases have 2 components, CF(1) - the catalytic core - and CF(0) - the membrane proton channel. CF(1) has five subunits: alpha(3), beta(3), gamma(1), delta(1), epsilon(1). CF(0) has three main subunits: a(1), b(2) and c(9-12). The alpha and beta chains form an alternating ring which encloses part of the gamma chain. CF(1) is attached to CF(0) by a central stalk formed by the gamma and epsilon chains, while a peripheral stalk is formed by the delta and b chains.

The protein resides in the cell inner membrane. It carries out the reaction ATP + H2O + 4 H(+)(in) = ADP + phosphate + 5 H(+)(out). Its function is as follows. Produces ATP from ADP in the presence of a proton gradient across the membrane. The catalytic sites are hosted primarily by the beta subunits. This is ATP synthase subunit beta from Pseudomonas fluorescens (strain SBW25).